The following is a 440-amino-acid chain: Xylose isomerase (440 aa).

Active-site residues include histidine 101 and aspartate 104. Residues glutamate 232, glutamate 268, histidine 271, aspartate 296, aspartate 307, aspartate 309, and aspartate 339 each coordinate Mg(2+).

It belongs to the xylose isomerase family. In terms of assembly, homotetramer. Mg(2+) serves as cofactor.

It localises to the cytoplasm. It carries out the reaction alpha-D-xylose = alpha-D-xylulofuranose. The protein is Xylose isomerase of Escherichia coli (strain SMS-3-5 / SECEC).